A 367-amino-acid chain; its full sequence is 3-dehydroquinate synthase (367 aa).

NAD(+) contacts are provided by residues 69–74, 103–107, 127–128, Lys140, and Lys149; these read DGEAFK, GVIGD, and TT. Zn(2+) contacts are provided by Glu182, His245, and His262.

It belongs to the sugar phosphate cyclases superfamily. Dehydroquinate synthase family. The cofactor is NAD(+). Co(2+) serves as cofactor. It depends on Zn(2+) as a cofactor.

Its subcellular location is the cytoplasm. It catalyses the reaction 7-phospho-2-dehydro-3-deoxy-D-arabino-heptonate = 3-dehydroquinate + phosphate. It functions in the pathway metabolic intermediate biosynthesis; chorismate biosynthesis; chorismate from D-erythrose 4-phosphate and phosphoenolpyruvate: step 2/7. Functionally, catalyzes the conversion of 3-deoxy-D-arabino-heptulosonate 7-phosphate (DAHP) to dehydroquinate (DHQ). In Pseudomonas syringae pv. tomato (strain ATCC BAA-871 / DC3000), this protein is 3-dehydroquinate synthase.